The primary structure comprises 378 residues: Putative dioxygenase VC_1345 (378 aa).

Fe cation is bound by residues His288, Asp294, and His324.

Belongs to the homogentisate dioxygenase family. The cofactor is Fe cation.

This is Putative dioxygenase VC_1345 from Vibrio cholerae serotype O1 (strain ATCC 39315 / El Tor Inaba N16961).